The following is a 216-amino-acid chain: Probable GTP-binding protein EngB (216 aa).

Residues Gln24–Asp205 form the EngB-type G domain. GTP contacts are provided by residues Gly32–Ser39, Gly59–Ala63, Asp86–Gly89, Thr153–Asp156, and Phe184–Ala186. Ser39 and Thr61 together coordinate Mg(2+).

It belongs to the TRAFAC class TrmE-Era-EngA-EngB-Septin-like GTPase superfamily. EngB GTPase family. Mg(2+) serves as cofactor.

Functionally, necessary for normal cell division and for the maintenance of normal septation. This is Probable GTP-binding protein EngB from Anaeromyxobacter sp. (strain Fw109-5).